Consider the following 159-residue polypeptide: Putative ribosomal RNA large subunit methyltransferase H (159 aa).

Residues L76, G108, and 127 to 132 (FSKMTF) each bind S-adenosyl-L-methionine.

The protein belongs to the RNA methyltransferase RlmH family.

Its subcellular location is the cytoplasm. It catalyses the reaction pseudouridine(1915) in 23S rRNA + S-adenosyl-L-methionine = N(3)-methylpseudouridine(1915) in 23S rRNA + S-adenosyl-L-homocysteine + H(+). In terms of biological role, specifically methylates the pseudouridine at position 1915 (m3Psi1915) in 23S rRNA. This chain is Putative ribosomal RNA large subunit methyltransferase H, found in Methanococcus maripaludis (strain DSM 14266 / JCM 13030 / NBRC 101832 / S2 / LL).